The sequence spans 264 residues: Proteasome subunit beta type-4 (264 aa).

Methionine 1 carries the post-translational modification N-acetylmethionine. The propeptide occupies 1-45 (MEAFLGSRSGLWAGGPAPGQFYRIPSTPDSFMDPASALYRGPITR). Serine 26 carries the post-translational modification Phosphoserine. Tyrosine 102 is subject to Phosphotyrosine.

It belongs to the peptidase T1B family. As to quaternary structure, the 26S proteasome consists of a 20S proteasome core and two 19S regulatory subunits. The 20S proteasome core is a barrel-shaped complex made of 28 subunits that are arranged in four stacked rings. The two outer rings are each formed by seven alpha subunits, and the two inner rings are formed by seven beta subunits. The proteolytic activity is exerted by three beta-subunits PSMB5, PSMB6 and PSMB7. Forms a ternary complex with SMAD1 and OAZ1 before PSMB4 is incorporated into the 20S proteasome. Interacts with PRPF19. In terms of assembly, (Microbial infection) Interacts with HTLV-1 Tax protein. (Microbial infection) Interacts with HIV-1 Nef and Tat proteins.

The protein resides in the cytoplasm. It localises to the nucleus. In terms of biological role, non-catalytic component of the 20S core proteasome complex involved in the proteolytic degradation of most intracellular proteins. This complex plays numerous essential roles within the cell by associating with different regulatory particles. Associated with two 19S regulatory particles, forms the 26S proteasome and thus participates in the ATP-dependent degradation of ubiquitinated proteins. The 26S proteasome plays a key role in the maintenance of protein homeostasis by removing misfolded or damaged proteins that could impair cellular functions, and by removing proteins whose functions are no longer required. Associated with the PA200 or PA28, the 20S proteasome mediates ubiquitin-independent protein degradation. This type of proteolysis is required in several pathways including spermatogenesis (20S-PA200 complex) or generation of a subset of MHC class I-presented antigenic peptides (20S-PA28 complex). SMAD1/OAZ1/PSMB4 complex mediates the degradation of the CREBBP/EP300 repressor SNIP1. The chain is Proteasome subunit beta type-4 from Homo sapiens (Human).